Here is a 504-residue protein sequence, read N- to C-terminus: MALWRSSDNTVYLPPPSVAKVVNTDDYVTRTGIYYYAGSSRLLTVGHPYFKVPVNGGRKQEIPKVSAYQYRVFRVSLPDPNKFGLPDPSLYNPDTQRLVWACIGVEIGRGQPLGVGVSGHPLYNRLDDTENSHFSSAVSTQDSRDNVSVDYKQTQLCIIGCVPAMGEHWAKGKACKSTQQGDCPPLELVNTAIEDGDMIDTGYGAMDFRTLQETKSEVPLDICQSVCKYPDYLQMSADVYGDSMFFCLRKEQLFARHFWNRGGMVGDTIPSELYIKGTDIRERPGTHVYSPSPSGSMVSSDSQLFNKPYWLHKAQGHNNGICWHNQLFITVVDTTRSTNFTLSACTETAIPAVYSPTKFKEYTRHVEEYDLQFIFQLCTITLTADVMAYIHTMNPAILDNWNIGVTPPPSASLVDTYRYLQSAAIACQKDAPTPEKKDPYDDLKFWNVDLKEKFSTELDQFPLGRKFLLQVGARRRPTIGPRKRPASAKSSSSASKHKRKRVSK.

2 stretches are compositionally biased toward basic residues: residues 474 to 486 and 495 to 504; these read RRRPTIGPRKRPA and SKHKRKRVSK. The tract at residues 474–504 is disordered; the sequence is RRRPTIGPRKRPASAKSSSSASKHKRKRVSK.

It belongs to the papillomaviridae L1 protein family. As to quaternary structure, self-assembles into homopentamers. The capsid has an icosahedral symmetry and consists of 72 capsomers, with each capsomer being a pentamer of L1. Interacts with the minor capsid protein L2; this interaction is necessary for viral genome encapsidation. Interacts with protein E2; this interaction enhances E2-dependent replication and transcription activation.

The protein resides in the virion. Its subcellular location is the host nucleus. Functionally, forms an icosahedral capsid with a T=7 symmetry and a 50 nm diameter. The capsid is composed of 72 pentamers linked to each other by disulfide bonds and associated with L2 proteins. Binds to heparan sulfate proteoglycans on cell surface of basal layer keratinocytes to provide initial virion attachment. This binding mediates a conformational change in the virus capsid that facilitates efficient infection. The virion enters the host cell via endocytosis. During virus trafficking, L1 protein dissociates from the viral DNA and the genomic DNA is released to the host nucleus. The virion assembly takes place within the cell nucleus. Encapsulates the genomic DNA together with protein L2. This Homo sapiens (Human) protein is Major capsid protein L1.